Reading from the N-terminus, the 55-residue chain is UPF0391 membrane protein RSp1666 (55 aa).

Transmembrane regions (helical) follow at residues 5–25 (AVIFFIIALIAALFGFGGIAA) and 33–53 (ILFMIFVVLFVVSLFWGLVAG).

It belongs to the UPF0391 family.

The protein resides in the cell membrane. This Ralstonia nicotianae (strain ATCC BAA-1114 / GMI1000) (Ralstonia solanacearum) protein is UPF0391 membrane protein RSp1666.